The sequence spans 137 residues: Basic phospholipase A2 homolog MT1 (137 aa).

An N-terminal signal peptide occupies residues 1–16 (MRTLWIVALLLVGVEG). Intrachain disulfides connect C42/C131, C44/C60, C59/C111, C65/C137, C66/C104, C73/C97, and C91/C102. Residues 121–133 (KKYKAYFKFKCKK) are important for membrane-damaging activities in eukaryotes and bacteria; heparin-binding.

The protein belongs to the phospholipase A2 family. Group II subfamily. K49 sub-subfamily. In terms of assembly, binds to heparin. In terms of tissue distribution, expressed by the venom gland.

Its subcellular location is the secreted. With respect to regulation, heparin and wedelolactone inhibit the myotoxic activity. The PLA2 inhibitor, para-bromophenacyl bromide (BPB), inhibits the myotoxic activity. Snake venom phospholipase A2 homolog that lacks enzymatic activity. Has myotoxic activities. A model of myotoxic mechanism has been proposed: an apo Lys49-PLA2 is activated by the entrance of a hydrophobic molecule (e.g. fatty acid) at the hydrophobic channel of the protein leading to a reorientation of a monomer. This reorientation causes a transition between 'inactive' to 'active' states, causing alignment of C-terminal and membrane-docking sites (MDoS) side-by-side and putting the membrane-disruption sites (MDiS) in the same plane, exposed to solvent and in a symmetric position for both monomers. The MDoS region stabilizes the toxin on membrane by the interaction of charged residues with phospholipid head groups. Subsequently, the MDiS region destabilizes the membrane with penetration of hydrophobic residues. This insertion causes a disorganization of the membrane, allowing an uncontrolled influx of ions (i.e. calcium and sodium), and eventually triggering irreversible intracellular alterations and cell death. In Agkistrodon contortrix laticinctus (Broad-banded copperhead), this protein is Basic phospholipase A2 homolog MT1.